A 325-amino-acid chain; its full sequence is ATP phosphoribosyltransferase (325 aa).

The protein belongs to the ATP phosphoribosyltransferase family. Long subfamily. It depends on Mg(2+) as a cofactor.

The protein resides in the cytoplasm. It carries out the reaction 1-(5-phospho-beta-D-ribosyl)-ATP + diphosphate = 5-phospho-alpha-D-ribose 1-diphosphate + ATP. It participates in amino-acid biosynthesis; L-histidine biosynthesis; L-histidine from 5-phospho-alpha-D-ribose 1-diphosphate: step 1/9. With respect to regulation, feedback inhibited by histidine. Catalyzes the condensation of ATP and 5-phosphoribose 1-diphosphate to form N'-(5'-phosphoribosyl)-ATP (PR-ATP). Has a crucial role in the pathway because the rate of histidine biosynthesis seems to be controlled primarily by regulation of HisG enzymatic activity. The sequence is that of ATP phosphoribosyltransferase from Rhodopseudomonas palustris (strain HaA2).